The primary structure comprises 1375 residues: MVPGEENQLVPKEDVFWRCRQNIFDEMKKKFLQIENAAEEPRVLCIIQDTTNSKTVNERITLNLPASTPVRKLFEDVANKVGYINGTFDLVWGNGINTADMAPLDHTSDKSLLDANFEPGKKNFLHLTDKDGEQPQILLEDSSAGEDSVHDRFIGPLPREGSGGSTSDYVSQSYSYSSILNKSETGYVGLVNQAMTCYLNSLLQTLFMTPEFRNALYKWEFEESEEDPVTSIPYQLQRLFVLLQTSKKRAIETTDVTRSFGWDSSEAWQQHDVQELCRVMFDALEQKWKQTEQADLINELYQGKLKDYVRCLECGYEGWRIDTYLDIPLVIRPYGSSQAFASVEEALHAFIQPEILDGPNQYFCERCKKKCDARKGLRFLHFPYLLTLQLKRFDFDYTTMHRIKLNDRMTFPEELDMSTFIDVEDEKSPQTESCTDSGAENEGSCHSDQMSNDFSNDDGVDEGICLETNSGTEKISKSGLEKNSLIYELFSVMVHSGSAAGGHYYACIKSFSDEQWYSFNDQHVSRITQEDIKKTHGGSSGSRGYYSSAFASSTNAYMLIYRLKDPARNAKFLEVDEYPEHIKNLVQKERELEEQEKRQREIERNTCKIKLFCLHPTKQVMMENKLEVHKDKTLKEAVEMAYKMMDLEEVIPLDCCRLVKYDEFHDYLERSYEGEEDTPMGLLLGGVKSTYMFDLLLETRKPDQVFQSYKPGEVMVKVHVVDLKAESVAAPITVRAYLNQTVTEFKQLISKAIHLPAETMRIVLERCYNDLRLLSVSSKTLKAEGFFRSNKVFVESSETLDYQMAFADSHLWKLLDRHANTIRLFVLLPEQSPVSYSKRTAYQKAGGDSGNVDDDCERVKGPVGSLKSVEAILEESTEKLKSLSLQQQQDGDNGDSSKSTETSDFENIESPLNERDSSASVDNRELEQHIQTSDPENFQSEERSDSDVNNDRSTSSVDSDILSSSHSSDTLCNADNAQIPLANGLDSHSITSSRRTKANEGKKETWDTAEEDSGTDSEYDESGKSRGEMQYMYFKAEPYAADEGSGEGHKWLMVHVDKRITLAAFKQHLEPFVGVLSSHFKVFRVYASNQEFESVRLNETLSSFSDDNKITIRLGRALKKGEYRVKVYQLLVNEQEPCKFLLDAVFAKGMTVRQSKEELIPQLREQCGLELSIDRFRLRKKTWKNPGTVFLDYHIYEEDINISSNWEVFLEVLDGVEKMKSMSQLAVLSRRWKPSEMKLDPFQEVVLESSSVDELREKLSEISGIPLDDIEFAKGRGTFPCDISVLDIHQDLDWNPKVSTLNVWPLYICDDGAVIFYRDKTEELMELTDEQRNELMKKESSRLQKTGHRVTYSPRKEKALKIYLDGAPNKDLTQD.

K122 carries the N6-acetyllysine modification. The 377-residue stretch at 188–564 (VGLVNQAMTC…NAYMLIYRLK (377 aa)) folds into the USP domain. Residue C197 is the Nucleophile of the active site. The segment at 425–452 (DEKSPQTESCTDSGAENEGSCHSDQMSN) is disordered. Over residues 430–452 (QTESCTDSGAENEGSCHSDQMSN) the composition is skewed to polar residues. Catalysis depends on H503, which acts as the Proton acceptor. S832 bears the Phosphoserine mark. Disordered stretches follow at residues 840–859 (TAYQKAGGDSGNVDDDCERV), 880–968 (LKSL…SHSS), and 983–1024 (NGLD…ESGK). Low complexity predominate over residues 882–899 (SLSLQQQQDGDNGDSSKS). The residue at position 910 (S910) is a Phosphoserine. A compositionally biased stretch (basic and acidic residues) spans 912–928 (LNERDSSASVDNRELEQ). The span at 929–938 (HIQTSDPENF) shows a compositional bias: polar residues. A Phosphoserine modification is found at S933. A compositionally biased stretch (basic and acidic residues) spans 940-950 (SEERSDSDVNN). The span at 953–968 (STSSVDSDILSSSHSS) shows a compositional bias: low complexity. A compositionally biased stretch (basic and acidic residues) spans 997 to 1006 (KANEGKKETW). Acidic residues predominate over residues 1007 to 1020 (DTAEEDSGTDSEYD). S1013 is modified (phosphoserine). T1015 bears the Phosphothreonine mark. At S1017 the chain carries Phosphoserine.

It belongs to the peptidase C19 family. In terms of assembly, interacts with BTRC and FBXW11. Interacts with POLB. Expressed in skeletal muscle, heart and testis.

The protein resides in the cytoplasm. The catalysed reaction is Thiol-dependent hydrolysis of ester, thioester, amide, peptide and isopeptide bonds formed by the C-terminal Gly of ubiquitin (a 76-residue protein attached to proteins as an intracellular targeting signal).. Functionally, ubiquitin-specific protease that specifically deubiquitinates monoubiquitinated DNA polymerase beta (POLB), stabilizing POLB thereby playing a role in base-excision repair (BER). Acts as a regulator of cell growth and genome integrity. May also indirectly regulate CDC25A expression at a transcriptional level. The polypeptide is Ubiquitin carboxyl-terminal hydrolase 47 (USP47) (Homo sapiens (Human)).